The following is a 398-amino-acid chain: UPF0229 protein Ccel_0490 (398 aa).

Disordered regions lie at residues 1 to 22 (MAIFRDCSNIGKDRSAEDRRRH) and 68 to 104 (KSKPGVGAGDGNEKRGDKFPGDSQEGKGKGNAGNSEG). Composition is skewed to basic and acidic residues over residues 11–22 (GKDRSAEDRRRH) and 78–95 (GNEKRGDKFPGDSQEGKG).

The protein belongs to the UPF0229 family.

This Ruminiclostridium cellulolyticum (strain ATCC 35319 / DSM 5812 / JCM 6584 / H10) (Clostridium cellulolyticum) protein is UPF0229 protein Ccel_0490.